Here is a 213-residue protein sequence, read N- to C-terminus: Thymidylate kinase (213 aa).

10–17 serves as a coordination point for ATP; it reads GLEGAGKT.

It belongs to the thymidylate kinase family.

The catalysed reaction is dTMP + ATP = dTDP + ADP. Its function is as follows. Phosphorylation of dTMP to form dTDP in both de novo and salvage pathways of dTTP synthesis. The chain is Thymidylate kinase from Salmonella dublin (strain CT_02021853).